The chain runs to 152 residues: Phospholipase A2 GL16-1 (152 aa).

The signal sequence occupies residues 1-21; the sequence is MNPAHLLVLLAVCVSLLGAST. Positions 22–27 are excised as a propeptide; sequence IPPLPL. Intrachain disulfides connect cysteine 38/cysteine 104, cysteine 54/cysteine 151, cysteine 56/cysteine 72, cysteine 71/cysteine 132, cysteine 78/cysteine 125, cysteine 88/cysteine 118, and cysteine 111/cysteine 123. Positions 55, 57, and 59 each coordinate Ca(2+). Residue histidine 75 is part of the active site. Ca(2+) is bound at residue aspartate 76. The active site involves aspartate 126.

Belongs to the phospholipase A2 family. Group I subfamily. Ca(2+) serves as cofactor.

The protein resides in the secreted. The catalysed reaction is a 1,2-diacyl-sn-glycero-3-phosphocholine + H2O = a 1-acyl-sn-glycero-3-phosphocholine + a fatty acid + H(+). Functionally, PA2 catalyzes the calcium-dependent hydrolysis of the 2-acyl groups in 3-sn-phosphoglycerides. This is Phospholipase A2 GL16-1 from Laticauda semifasciata (Black-banded sea krait).